The sequence spans 298 residues: Glutamyl-Q tRNA(Asp) synthetase (298 aa).

Residues Arg12–Thr16 and Glu48 contribute to the L-glutamate site. The 'HIGH' region signature appears at Pro15 to Ser25. 4 residues coordinate Zn(2+): Cys104, Cys106, Tyr118, and Cys122. L-glutamate contacts are provided by Tyr175 and Arg193. Positions Lys231 to Ser235 match the 'KMSKS' region motif. An ATP-binding site is contributed by Lys234.

The protein belongs to the class-I aminoacyl-tRNA synthetase family. GluQ subfamily. It depends on Zn(2+) as a cofactor.

In terms of biological role, catalyzes the tRNA-independent activation of glutamate in presence of ATP and the subsequent transfer of glutamate onto a tRNA(Asp). Glutamate is transferred on the 2-amino-5-(4,5-dihydroxy-2-cyclopenten-1-yl) moiety of the queuosine in the wobble position of the QUC anticodon. This is Glutamyl-Q tRNA(Asp) synthetase from Pseudomonas fluorescens (strain ATCC BAA-477 / NRRL B-23932 / Pf-5).